We begin with the raw amino-acid sequence, 100 residues long: MSRRCQITGKGVLTGNNVSHANNKSRRRFLPNLQETSLLSDILGSAVRLRLSTNGIRTVEHNGGLDAFLLSTPNRKLPTEAQALKRRILRAKEKKAEATA.

It belongs to the bacterial ribosomal protein bL28 family.

The sequence is that of Large ribosomal subunit protein bL28 from Gluconacetobacter diazotrophicus (strain ATCC 49037 / DSM 5601 / CCUG 37298 / CIP 103539 / LMG 7603 / PAl5).